Reading from the N-terminus, the 343-residue chain is Ribosomal RNA small subunit methyltransferase C (343 aa).

Belongs to the methyltransferase superfamily. RsmC family. As to quaternary structure, monomer.

It localises to the cytoplasm. It catalyses the reaction guanosine(1207) in 16S rRNA + S-adenosyl-L-methionine = N(2)-methylguanosine(1207) in 16S rRNA + S-adenosyl-L-homocysteine + H(+). In terms of biological role, specifically methylates the guanine in position 1207 of 16S rRNA in the 30S particle. The chain is Ribosomal RNA small subunit methyltransferase C from Escherichia coli O1:K1 / APEC.